An 862-amino-acid chain; its full sequence is Transcription initiation factor TFIID subunit 4B (862 aa).

Residues 100 to 241 form a sufficient for interaction with ZNF628 region; that stretch reads NTTTIQFPAN…TPSNEPNLKA (142 aa). Positions 219 to 237 are enriched in polar residues; it reads VTTLKPSSLGASSTPSNEP. A disordered region spans residues 219 to 239; the sequence is VTTLKPSSLGASSTPSNEPNL. Residues 256–353 form the TAFH domain; that stretch reads LENVKKCKNF…CVQQTSSDMV (98 aa). Positions 511–533 are required for interaction with P65/RELA; the sequence is PGPVLSQPAGIPQAVQVKQLVVQ. A Nuclear export signal motif is present at residues 516–556; it reads SQPAGIPQAVQVKQLVVQQPSGGNEKQVTTISHSSTLTIQK. Ser-595 bears the Phosphoserine mark. Residues 653–702 enclose the Histone-fold domain; the sequence is PFLFIGALQKRILDIGKKHDITELNSDAVNLISQATQERLRGLLEKLTAI. A coiled-coil region spans residues 722 to 787; the sequence is TRSQLKFLEK…LAQIQHRDAN (66 aa). The segment at 830–862 is required for interaction with TAF12; it reads PRITRICLRDLIFCMEQEREMKYSRALYLALLK.

Belongs to the TAF4 family. TFIID is composed of TATA binding protein (TBP) and a number of TBP-associated factors (TAFs). Heterodimerizes with TAF12/TFII20 via the C-terminal H2A-like histone-fold domain. This heterodimer forms a histone-like octamer with the TAF6/TAFII70-TAF9/TAFII31 heterodimer. Interacts with P65/RELA homodimers and P65/RELA-REL heterodimers. Interaction with POU2AF1, via its C-terminal activation domain, is required for octamer-dependent transcription. Interacts with ZNF628. Under stimulation by forskolin, Isoform 1 is phosphorylated by protein kinase A (PKA). As to expression, preferentially expressed in ovarian granulosa cells (at protein level). Highly expressed in B-cells.

The protein resides in the nucleus. The protein localises to the cytoplasm. In terms of biological role, cell type-specific subunit of the general transcription factor TFIID that may function as a gene-selective coactivator in certain cells. TFIID is a multimeric protein complex that plays a central role in mediating promoter responses to various activators and repressors. TAF4B is a transcriptional coactivator of the p65/RELA NF-kappa-B subunit. Involved in the activation of a subset of antiapoptotic genes including TNFAIP3. May be involved in regulating folliculogenesis. Through interaction with OCBA/POU2AF1, acts as a coactivator of B-cell-specific transcription. Plays a role in spermiogenesis and oogenesis. This chain is Transcription initiation factor TFIID subunit 4B (TAF4B), found in Homo sapiens (Human).